The chain runs to 221 residues: Endo-1,4-beta-xylanase 1 (221 aa).

An N-terminal signal peptide occupies residues M1–A22. Residues P29 to S221 form the GH11 domain. The active-site Nucleophile is E114. Catalysis depends on E208, which acts as the Proton donor.

It belongs to the glycosyl hydrolase 11 (cellulase G) family.

Its subcellular location is the secreted. The catalysed reaction is Endohydrolysis of (1-&gt;4)-beta-D-xylosidic linkages in xylans.. It participates in glycan degradation; xylan degradation. Functionally, endo-1,4-beta-xylanase involved in the hydrolysis of xylan, a major structural heterogeneous polysaccharide found in plant biomass representing the second most abundant polysaccharide in the biosphere, after cellulose. Hydrolyzes xylans from oat spelt and birchwood at similar rates, but it has no detectable activity toward Avicel or carboxymethyl cellulose. The polypeptide is Endo-1,4-beta-xylanase 1 (xynI) (Aureobasidium pullulans (Black yeast)).